The chain runs to 437 residues: MEAAGARNRDARSRAEKSPPESRKVYMDYNATTPLEPEVIEAMTEAMREAWGNPSSSYPAGRKAKEIINTARENLAKMIGGQPQDVIFTSGGTESNNLVIQSVVKHFHKVHAANGDTGGHPNPVDGALPHIITCTVEHDSIRLPLEHLREERVAEVTFVPVSKVNGQVEAEDILAAVRPATCLVTIMLANNETGVIMPVPEISRRVRALNQQRVAGGLPGVLVHTDAAQALGKQRVDVRDLGVDFLTIVGHKFYGPRIGALYVRGLGEHTPLYPMLFGGGQERNFRPGTENTPMIAGLGKAAELVAENGEAYEAHMRGVRDYLEERLAAEFGERIHLNSQFPGAERLPNTCNFSIRGPQLQGRAVLAQCRTLLASVGAACHSDLGDRPSPVLLSCGVPVDVARNAIRLSVGRSSTRAEVDLVVQDLKQAVARLEGQA.

The residue at position 1 (Met-1) is an N-acetylmethionine. Residues 1-30 form a disordered region; the sequence is MEAAGARNRDARSRAEKSPPESRKVYMDYN. A compositionally biased stretch (basic and acidic residues) spans 7 to 26; sequence RNRDARSRAEKSPPESRKVY. Lys-252 bears the N6-(pyridoxal phosphate)lysine mark. Cys-380 serves as the catalytic S-selanylcysteine intermediate.

It belongs to the class-V pyridoxal-phosphate-dependent aminotransferase family. Homodimer. It depends on pyridoxal 5'-phosphate as a cofactor.

The protein localises to the cytoplasm. It is found in the cytosol. The enzyme catalyses L-selenocysteine + AH2 = hydrogenselenide + L-alanine + A + H(+). Functionally, catalyzes the decomposition of L-selenocysteine to L-alanine and elemental selenium. This is Selenocysteine lyase (SCLY) from Bos taurus (Bovine).